Consider the following 681-residue polypeptide: Chaperone protein HtpG (681 aa).

An a; substrate-binding region spans residues 1 to 326 (MQKGNIGVTT…SPDIPLNVSR (326 aa)). The b stretch occupies residues 327 to 545 (SYLQSDSNVK…YMRRMKEMAN (219 aa)). Positions 546–681 (IQAGMSFYGE…NFVKRSIELI (136 aa)) are c. Residues 601–620 (DALKKKQEGKKDEDIPTAEK) form a disordered region.

The protein belongs to the heat shock protein 90 family. As to quaternary structure, homodimer.

The protein localises to the cytoplasm. In terms of biological role, molecular chaperone. Has ATPase activity. The sequence is that of Chaperone protein HtpG from Bacteroides fragilis (strain ATCC 25285 / DSM 2151 / CCUG 4856 / JCM 11019 / LMG 10263 / NCTC 9343 / Onslow / VPI 2553 / EN-2).